The following is a 739-amino-acid chain: Polyribonucleotide nucleotidyltransferase (739 aa).

The Mg(2+) site is built by D488 and D494. A KH domain is found at 555–614 (PKIVTLKINPDKIRDVIGPGGKVINGIIDETGVKIDIDQDGTVFIASTDQDGINHARQLI). One can recognise an S1 motif domain in the interval 624–692 (GEEFDGTVRR…DKGRVNASHK (69 aa)). Positions 698 to 739 (GMSPEDRAAYDEKKKTERDSRPPRRDTGSRPPRDGQRPPRRN) are disordered. The segment covering 701–739 (PEDRAAYDEKKKTERDSRPPRRDTGSRPPRDGQRPPRRN) has biased composition (basic and acidic residues).

The protein belongs to the polyribonucleotide nucleotidyltransferase family. Mg(2+) is required as a cofactor.

It localises to the cytoplasm. It catalyses the reaction RNA(n+1) + phosphate = RNA(n) + a ribonucleoside 5'-diphosphate. Its function is as follows. Involved in mRNA degradation. Catalyzes the phosphorolysis of single-stranded polyribonucleotides processively in the 3'- to 5'-direction. In Exiguobacterium sibiricum (strain DSM 17290 / CCUG 55495 / CIP 109462 / JCM 13490 / 255-15), this protein is Polyribonucleotide nucleotidyltransferase.